Reading from the N-terminus, the 525-residue chain is Serine/threonine protein phosphatase 2A 55 kDa regulatory subunit B beta isoform (525 aa).

Residues 1–31 (MDPFSKSPDDDDLRPEAEAARRPQPQPQPRE) are disordered. WD repeat units follow at residues 48-87 (QEVD…DSAS) and 124-165 (EIEE…VKRI). The interval 169–191 (NLNTSQSSGNGTTSSSSSSSSRA) is disordered. The segment covering 171–189 (NTSQSSGNGTTSSSSSSSS) has biased composition (low complexity). 4 WD repeats span residues 244–282 (AHDY…QSFN), 293–333 (DLTE…LCDN), 352–390 (EIIA…GPVA), and 495–525 (DLST…MYYA).

Belongs to the phosphatase 2A regulatory subunit B family. In terms of assembly, PP2A consists of a common heteromeric enzyme, composed of a catalytic subunit (subunits C), a constant regulatory subunit (subunit A), and a variety of regulatory subunits such as subunits B (the R2/B/PR55/B55, R3/B''/PR72/PR130/PR59 and R5/B'/B56 families).

Functionally, the B regulatory subunit may modulate substrate selectivity and catalytic activity, and may also direct the localization of the catalytic enzyme to a particular subcellular compartment. The protein is Serine/threonine protein phosphatase 2A 55 kDa regulatory subunit B beta isoform of Oryza sativa subsp. indica (Rice).